The chain runs to 937 residues: Outer membrane usher protein CS3-2 (937 aa).

The protein belongs to the fimbrial export usher family. In terms of processing, a 97 kDa form of the protein is thought to be due to post-translational processing of isoform 104 kDa.

It localises to the cell outer membrane. Its function is as follows. These proteins are essential for the biogenesis of mature CS3 pili, but not for synthesis of the CS3 pilin subunit. This Escherichia coli protein is Outer membrane usher protein CS3-2.